We begin with the raw amino-acid sequence, 134 residues long: Profilin-2 (134 aa).

The cysteines at positions 13 and 118 are disulfide-linked. Residues 84–100 carry the Involved in PIP2 interaction motif; it reads AVIRGKKGSGGITIKET. Thr114 bears the Phosphothreonine mark.

Belongs to the profilin family. In terms of assembly, occurs in many kinds of cells as a complex with monomeric actin in a 1:1 ratio. Phosphorylated by MAP kinases.

It localises to the cytoplasm. The protein resides in the cytoskeleton. Binds to actin and affects the structure of the cytoskeleton. At high concentrations, profilin prevents the polymerization of actin, whereas it enhances it at low concentrations. The sequence is that of Profilin-2 from Olea europaea (Common olive).